A 482-amino-acid chain; its full sequence is Histone deacetylase 1 (482 aa).

Residues 9–321 form a histone deacetylase region; the sequence is RKVCYYYDGD…WTYETAVALD (313 aa). The 1D-myo-inositol 1,4,5,6-tetrakisphosphate site is built by Gly27 and Lys31. Lys74 is modified (N6-acetyllysine; alternate). Lys74 participates in a covalent cross-link: Glycyl lysine isopeptide (Lys-Gly) (interchain with G-Cter in SUMO2); alternate. His141 is an active-site residue. 2 residues coordinate Zn(2+): Asp176 and His178. Residue Lys220 is modified to N6-acetyllysine. Cys261 carries the S-nitrosocysteine modification. Asp264 is a Zn(2+) binding site. Position 270 (Arg270) interacts with 1D-myo-inositol 1,4,5,6-tetrakisphosphate. Residue Cys273 is modified to S-nitrosocysteine. A compositionally biased stretch (acidic residues) spans 390–400; sequence PEESGDEDEED. The disordered stretch occupies residues 390–482; it reads PEESGDEDEE…KGVKEEVKLA (93 aa). Phosphoserine is present on residues Ser393, Ser406, Ser409, Ser421, and Ser423. The span at 401–416 shows a compositional bias: basic and acidic residues; the sequence is PDKRISICSSDKRIAC. A compositionally biased stretch (acidic residues) spans 417–427; it reads EEEFSDSDEEG. Position 432 is an N6-methylated lysine; by EHMT2 (Lys432). Residue Lys438 forms a Glycyl lysine isopeptide (Lys-Gly) (interchain with G-Cter in SUMO2) linkage. The span at 443–482 shows a compositional bias: basic and acidic residues; that stretch reads VKTEDEKEKDPEEKKEVTEEEKTKEEKQEAKGVKEEVKLA. Lys444 participates in a covalent cross-link: Glycyl lysine isopeptide (Lys-Gly) (interchain with G-Cter in SUMO2); alternate. A Glycyl lysine isopeptide (Lys-Gly) (interchain with G-Cter in SUMO); alternate cross-link involves residue Lys444. Glycyl lysine isopeptide (Lys-Gly) (interchain with G-Cter in SUMO2) cross-links involve residues Lys456, Lys457, and Lys473. Lys476 participates in a covalent cross-link: Glycyl lysine isopeptide (Lys-Gly) (interchain with G-Cter in SUMO2); alternate. Residue Lys476 forms a Glycyl lysine isopeptide (Lys-Gly) (interchain with G-Cter in SUMO); alternate linkage. Lys480 is covalently cross-linked (Glycyl lysine isopeptide (Lys-Gly) (interchain with G-Cter in SUMO2)).

It belongs to the histone deacetylase family. HD type 1 subfamily. As to quaternary structure, part of the core histone deacetylase (HDAC) complex composed of HDAC1, HDAC2, RBBP4 and RBBP7, the core complex associates with SIN3, SAP18 and SAP30 to form the SIN3 HDAC complex. Component of the nucleosome remodeling and deacetylase (NuRD) repressor complex, composed of core proteins MTA1, MTA2, MTA3, RBBP4, RBBP7, HDAC1, HDAC2, MBD2, MBD3, and peripherally associated proteins CDK2AP1, CDK2AP2, GATAD2A, GATAD2B, CHD3, CHD4 and CHD5. The exact stoichiometry of the NuRD complex is unknown, and some subunits such as MBD2 and MBD3, GATAD2A and GATAD2B, and CHD3, CHD4 and CHD5 define mutually exclusive NuRD complexes. Component of a BHC histone deacetylase complex that contains HDAC1, HDAC2, HMG20B/BRAF35, KDM1A, RCOR1/CoREST and PHF21A/BHC80. The BHC complex may also contain ZMYM2, ZNF217, ZMYM3, GSE1 and GTF2I. Component of a mSin3A corepressor complex that contains SIN3A, SAP130, SUDS3/SAP45, ARID4B/SAP180, HDAC1 and HDAC2. Found in a trimeric complex with APBB1 and TSHZ3; the interaction between HDAC1 and APBB1 is mediated by TSHZ3. Forms a complex comprising APPL1, RUVBL2, APPL2, CTNNB1 and HDAC2. Component of a RCOR/GFI/KDM1A/HDAC complex. Part of a complex composed of TRIM28, HDAC1, HDAC2 and EHMT2. Part of a complex containing at least CDYL, MIER1, MIER2, HDAC1 and HDAC2. The large PER complex involved in the histone deacetylation is composed of at least HDAC1, PER2, SFPQ and SIN3A. Associates with the 9-1-1 complex; interacts with HUS1. Found in a complex with DNMT3A and HDAC7. Found in a complex with YY1, SIN3A and GON4L. Identified in a histone deacetylase complex that contains DNTTIP1, HDAC1 and MIDEAS; this complex assembles into a tetramer that contains four copies of each protein chain. Found in a complex composed of at least SINHCAF, SIN3A, HDAC1, SAP30, RBBP4, OGT and TET1. Component of the SIN3B complex, which includes SIN3B, HDAC1, PHF12 and MORF4L1. Interacts with GFI1; the interaction is direct. Interacts directly with GFI1B. Interacts with TSHZ3 (via N-terminus); the interaction is direct. Interacts with APEX1; the interaction is not dependent on the acetylated status of APEX1. Interacts with BANP. Interacts with BAZ2A/TIP5. Interacts with BCL6. Interacts with BCOR. Interacts with BHLHE40/DEC1. Interacts with BRCC3; this interaction is enhanced in the presence of PWWP2B. Interacts with BRMS1. Interacts with BRMS1L. Interacts with C10orf90/FATS (via its N-terminal); the interaction prevents binding of HDAC1 to CDKN1A/p21 and facilitates the acetylation and stabilization of CDKN1A/p21. Interacts with CBFA2T3. Interacts with CCAR2. Interacts with CDK2AP1. Interacts with CHD3. Interacts with CHD4. Interacts with CHFR. Interacts with CIART. Interacts with CDKN1A/p21. Interacts with CDK5 complexed to CDK5R1 (p25). Interacts with CRY1. Interacts with DAXX. Interacts with DDIT3/CHOP. Interacts with DDX5. Interacts with DHX36; this interaction occurs in a RNA-dependent manner. Interacts with DNMT1. Interacts with DNTTIP1. Interacts with E4F1. Interacts with EP300. Interacts with ERCC6. Interacts with GATAD2A. Interacts with HCFC1. Interacts with HDAC9. Interacts with HUS1. Interacts with INSM1. Interacts with KDM4A. Interacts with KDM5A; this interaction impairs histone deacetylation. Interacts with KDM5B. Interacts with KLF1. Interacts with MBD3L2. Interacts with MIER1. Interacts with NFE4. Interacts with NR4A2/NURR1. Interacts with NR1D2 (via C-terminus). Interacts with NRIP1. Interacts with NSD2. Interacts with PACS2. Interacts with PHB2. Interacts with PPHLN1. Interacts with PRDM6. Interacts with PRDM16. Interacts with PWWP2A in a MTA1-dependent manner. Interacts with PWWP2B. Interacts with RB1. Interacts with RERE. Interacts with SANBR (via the BTB domain). Interacts with SAMSN1. Interacts with SAP30L. Interacts with SETDB1. Interacts with SIN3A. Interacts with SMAD3. Interacts with SMAD4; positively regulated by ZBTB7A. Interacts with SMARCAD1. Interacts with SMARCA4/BRG1. Interacts with SMYD2. Interacts with SMYD4 (via MYND-type zinc finger). Interacts with SP1; the interaction deacetylates SP1 and regulates its transcriptional activity. Interacts with SP3; the interaction deacetylates SP3 and regulates its transcriptional activity. In vitro, C(18) ceramides increase this interaction and the subsequent SP3 deacetylation and SP3-mediated repression of the TERT promoter. Interacts with SPEN/MINT. Interacts with SPHK2. Interacts with SUV39H1. Interacts with TGIF. Interacts with TGIF2. Interacts with TRAF6. Interacts with TRIM28; the interaction recruits HDAC1 to E2F1 and inhibits its acetylation. Interacts with TSC22D3 isoform 1; this interaction affects HDAC1 activity on MYOG promoter and thus inhibits MYOD1 transcriptional activity. Interacts with UHRF1. Interacts with UHRF2. Interacts with ZBTB7A. Interacts with ZMYND8. Interacts with ZMYND15. Interacts with ZNF431. Interacts with ZNF516; this interaction is enhanced in the presence of PWWP2B. Interacts with ZNF541. Interacts with ZNF638. Interacts with ZNHIT1. Interacts with the non-histone region of MACROH2A1. Identified in a complex with HDAC2, KCTD19, DNTTIP1 and ZNF541. Interacts with MSX3. Interacts with VRK1. Zn(2+) serves as cofactor. Post-translationally, sumoylated on Lys-444 and Lys-476; which promotes enzymatic activity. Desumoylated by SENP1. In terms of processing, phosphorylation on Ser-421 and Ser-423 promotes enzymatic activity and interactions with NuRD and SIN3 complexes. Phosphorylated by CDK5. Ubiquitinated by CHFR and KCTD11, leading to its degradation by the proteasome.

Its subcellular location is the nucleus. It carries out the reaction N(6)-acetyl-L-lysyl-[histone] + H2O = L-lysyl-[histone] + acetate. The enzyme catalyses N(6)-acetyl-L-lysyl-[protein] + H2O = L-lysyl-[protein] + acetate. The catalysed reaction is N(6)-(2E)-butenoyl-L-lysyl-[protein] + H2O = (2E)-2-butenoate + L-lysyl-[protein]. It catalyses the reaction N(6)-[(S)-lactoyl]-L-lysyl-[protein] + H2O = (S)-lactate + L-lysyl-[protein]. Inositol tetraphosphate (1D-myo-inositol 1,4,5,6-tetrakisphosphate) may act as an intermolecular glue between HDAC1 and N-Cor repressor complex components. Functionally, histone deacetylase that catalyzes the deacetylation of lysine residues on the N-terminal part of the core histones (H2A, H2B, H3 and H4). Histone deacetylation gives a tag for epigenetic repression and plays an important role in transcriptional regulation, cell cycle progression and developmental events. Histone deacetylases act via the formation of large multiprotein complexes. Acts as a component of the histone deacetylase NuRD complex which participates in the remodeling of chromatin. As part of the SIN3B complex is recruited downstream of the constitutively active genes transcriptional start sites through interaction with histones and mitigates histone acetylation and RNA polymerase II progression within transcribed regions contributing to the regulation of transcription. Also functions as a deacetylase for non-histone targets, such as NR1D2, RELA, SP1, SP3, STAT3 and TSHZ3. Deacetylates SP proteins, SP1 and SP3, and regulates their function. Component of the BRG1-RB1-HDAC1 complex, which negatively regulates the CREST-mediated transcription in resting neurons. Upon calcium stimulation, HDAC1 is released from the complex and CREBBP is recruited, which facilitates transcriptional activation. Deacetylates TSHZ3 and regulates its transcriptional repressor activity. Deacetylates 'Lys-310' in RELA and thereby inhibits the transcriptional activity of NF-kappa-B. Deacetylates NR1D2 and abrogates the effect of KAT5-mediated relieving of NR1D2 transcription repression activity. Component of a RCOR/GFI/KDM1A/HDAC complex that suppresses, via histone deacetylase (HDAC) recruitment, a number of genes implicated in multilineage blood cell development. Involved in CIART-mediated transcriptional repression of the circadian transcriptional activator: CLOCK-BMAL1 heterodimer. Required for the transcriptional repression of circadian target genes, such as PER1, mediated by the large PER complex or CRY1 through histone deacetylation. In addition to protein deacetylase activity, also has protein-lysine deacylase activity: acts as a protein decrotonylase and delactylase by mediating decrotonylation ((2E)-butenoyl) and delactylation (lactoyl) of histones, respectively. The polypeptide is Histone deacetylase 1 (HDAC1) (Bos taurus (Bovine)).